Consider the following 533-residue polypeptide: Inositol-3-phosphate synthase (533 aa).

Thr48 is modified (phosphothreonine). NAD(+) is bound by residues Gly74, Gly75, Asn76, Asn77, and Asp148. A phosphoserine mark is found at Ser177 and Ser184. NAD(+) is bound by residues Ser184, Ile185, Gln195, Asp196, Arg198, Thr244, Ala245, Asn246, Thr247, Gly295, Ser296, Asp320, Leu321, Ser323, Asn354, Asn355, and Asp356. Ser296 is modified (phosphoserine). The residue at position 368 (Ser368) is a Phosphoserine. Lys369 contributes to the NAD(+) binding site. The residue at position 374 (Ser374) is a Phosphoserine. Positions 409, 410, 438, and 439 each coordinate NAD(+).

It belongs to the myo-inositol 1-phosphate synthase family. Homotetramer. The cofactor is NAD(+). Phosphorylation at Ser-184 and Ser-374 is associated with a decrease in activity. Increasingly phosphorylated in presence of valproate.

It localises to the cytoplasm. The enzyme catalyses D-glucose 6-phosphate = 1D-myo-inositol 3-phosphate. It participates in polyol metabolism; myo-inositol biosynthesis; myo-inositol from D-glucose 6-phosphate: step 1/2. With respect to regulation, competitively inhibited by myo-2-inosose 1-phosphate, which is also an intermediate in the catalytic reaction. Competitively inhibited by 2-deoxy-myo-inositol 1-phosphate (dMIP), 1-deoxy-1-(phosphonomethyl)-myo-2-inosose (DPMI), dihydroxyacetone phosphate (DHAP), 6-deoxy-D-glucose 6-(E)-vinylhomophosphonate, 6-deoxy-D-glucitol 6-(E)-vinylhomophosphonate, 2,6-dideoxy-D-glucose 6-(E)-vinylhomophosphonate and 2,6-dideoxy-D-glucitol 6-(E)-vinylhomophosphonate. Inhibited by 2-deoxyglucitol 6-phosphate (dgtolP). Key enzyme in myo-inositol biosynthesis pathway that catalyzes the conversion of glucose 6-phosphate to 1-myo-inositol 1-phosphate in a NAD-dependent manner. Rate-limiting enzyme in the synthesis of all inositol-containing compounds. This chain is Inositol-3-phosphate synthase (INO1), found in Saccharomyces cerevisiae (strain ATCC 204508 / S288c) (Baker's yeast).